We begin with the raw amino-acid sequence, 61 residues long: Small ribosomal subunit protein uS14 (61 aa).

Zn(2+)-binding residues include C24, C27, C40, and C43.

It belongs to the universal ribosomal protein uS14 family. Zinc-binding uS14 subfamily. As to quaternary structure, part of the 30S ribosomal subunit. Contacts proteins S3 and S10. Zn(2+) serves as cofactor.

Binds 16S rRNA, required for the assembly of 30S particles and may also be responsible for determining the conformation of the 16S rRNA at the A site. The protein is Small ribosomal subunit protein uS14 of Beutenbergia cavernae (strain ATCC BAA-8 / DSM 12333 / CCUG 43141 / JCM 11478 / NBRC 16432 / NCIMB 13614 / HKI 0122).